Reading from the N-terminus, the 185-residue chain is Ribosome-recycling factor (185 aa).

Belongs to the RRF family.

It localises to the cytoplasm. Functionally, responsible for the release of ribosomes from messenger RNA at the termination of protein biosynthesis. May increase the efficiency of translation by recycling ribosomes from one round of translation to another. This Aliivibrio fischeri (strain MJ11) (Vibrio fischeri) protein is Ribosome-recycling factor.